The following is a 227-amino-acid chain: DNA repair protein RecO (227 aa).

This sequence belongs to the RecO family.

Involved in DNA repair and RecF pathway recombination. This chain is DNA repair protein RecO, found in Pseudomonas putida (strain ATCC 700007 / DSM 6899 / JCM 31910 / BCRC 17059 / LMG 24140 / F1).